A 150-amino-acid chain; its full sequence is UPF0756 membrane protein APL_0366 (150 aa).

Transmembrane regions (helical) follow at residues 12–34 (LVVLIFLGVVGNNNSITIAATVL), 52–72 (HGLSIGIIILTIGVLSPIVSG), 82–102 (FLNWKMLLAVVAGIAVAWLGG), and 123–143 (IIGVALLGGVPVGPLIAAGIL).

The protein belongs to the UPF0756 family.

The protein localises to the cell membrane. This is UPF0756 membrane protein APL_0366 from Actinobacillus pleuropneumoniae serotype 5b (strain L20).